Consider the following 436-residue polypeptide: Voltage-gated purine nucleotide uniporter SLC17A9 (436 aa).

10 consecutive transmembrane segments (helical) span residues 64-84 (IVLSSFFWGYCLTQVVGGHLG), 92-112 (VILLSASAWGSITAVTPLLAH), 118-138 (LAFMTFSRILMGLLQGVYFPA), 158-178 (IVGAGSQFGTLLTGAVGSLLL), 181-201 (YGWQSIFYFSGGLTLLWVWYV), 239-259 (PAVWAAVVSQLSAACSFFILL), 276-296 (WIFNVVPWLVAIPASLFSGFL), 316-336 (GMGLGLSSVFALCLGHTSSFC), 369-389 (GFLFGVANTAGALAGVVGVCL), and 402-422 (CLFNLVAIISNLGLCTFLVFG).

Belongs to the major facilitator superfamily. Sodium/anion cotransporter family. As to expression, widely expressed, but more predominantly in adrenal gland, brain and thyroid.

It localises to the cytoplasmic vesicle. The protein resides in the secretory vesicle. Its subcellular location is the chromaffin granule membrane. The protein localises to the secretory vesicle membrane. It is found in the lysosome membrane. It carries out the reaction ATP(in) = ATP(out). The catalysed reaction is ADP(in) = ADP(out). It catalyses the reaction GTP(in) = GTP(out). With respect to regulation, activity is chloride-dependent. Inhibited by AMP-PNP, gammaS-ATP, diadenosine triphosphate, 4,4'- diisothiocyanatostilbene-2,2'-disulfonate (DIDS) and Evans blue. Its function is as follows. Voltage-gated ATP nucleotide uniporter that can also transport the purine nucleotides ADP and GTP. Uses the membrane potential as the driving force to control ATP accumulation in lysosomes and secretory vesicles. By controlling ATP storage in lysosomes, regulates ATP-dependent proteins of these organelles. Also indirectly regulates the exocytosis of ATP through its import into lysosomes in astrocytes and secretory vesicles such as adrenal chromaffin granules, mucin granules and synaptic vesicles. The protein is Voltage-gated purine nucleotide uniporter SLC17A9 of Homo sapiens (Human).